We begin with the raw amino-acid sequence, 426 residues long: 4-hydroxy-3-methylbut-2-en-1-yl diphosphate synthase (flavodoxin) (426 aa).

[4Fe-4S] cluster-binding residues include cysteine 310, cysteine 313, cysteine 356, and glutamate 363.

The protein belongs to the IspG family. The cofactor is [4Fe-4S] cluster.

The enzyme catalyses (2E)-4-hydroxy-3-methylbut-2-enyl diphosphate + oxidized [flavodoxin] + H2O + 2 H(+) = 2-C-methyl-D-erythritol 2,4-cyclic diphosphate + reduced [flavodoxin]. It participates in isoprenoid biosynthesis; isopentenyl diphosphate biosynthesis via DXP pathway; isopentenyl diphosphate from 1-deoxy-D-xylulose 5-phosphate: step 5/6. Functionally, converts 2C-methyl-D-erythritol 2,4-cyclodiphosphate (ME-2,4cPP) into 1-hydroxy-2-methyl-2-(E)-butenyl 4-diphosphate. The sequence is that of 4-hydroxy-3-methylbut-2-en-1-yl diphosphate synthase (flavodoxin) from Rhodopseudomonas palustris (strain BisA53).